A 364-amino-acid polypeptide reads, in one-letter code: DNA replication and repair protein RecF (364 aa).

30–37 provides a ligand contact to ATP; that stretch reads GANGSGKT.

Belongs to the RecF family.

It is found in the cytoplasm. The RecF protein is involved in DNA metabolism; it is required for DNA replication and normal SOS inducibility. RecF binds preferentially to single-stranded, linear DNA. It also seems to bind ATP. The chain is DNA replication and repair protein RecF from Sodalis glossinidius (strain morsitans).